The sequence spans 295 residues: 4-hydroxy-tetrahydrodipicolinate synthase (295 aa).

A pyruvate-binding site is contributed by Thr45. The Proton donor/acceptor role is filled by Tyr131. The active-site Schiff-base intermediate with substrate is the Lys159. Val202 lines the pyruvate pocket.

Belongs to the DapA family. Homotetramer; dimer of dimers.

It is found in the cytoplasm. It carries out the reaction L-aspartate 4-semialdehyde + pyruvate = (2S,4S)-4-hydroxy-2,3,4,5-tetrahydrodipicolinate + H2O + H(+). It functions in the pathway amino-acid biosynthesis; L-lysine biosynthesis via DAP pathway; (S)-tetrahydrodipicolinate from L-aspartate: step 3/4. Catalyzes the condensation of (S)-aspartate-beta-semialdehyde [(S)-ASA] and pyruvate to 4-hydroxy-tetrahydrodipicolinate (HTPA). In Methanothrix thermoacetophila (strain DSM 6194 / JCM 14653 / NBRC 101360 / PT) (Methanosaeta thermophila), this protein is 4-hydroxy-tetrahydrodipicolinate synthase.